The following is a 337-amino-acid chain: Heat-inducible transcription repressor HrcA (337 aa).

Belongs to the HrcA family.

Its function is as follows. Negative regulator of class I heat shock genes (grpE-dnaK-dnaJ and groELS operons). Prevents heat-shock induction of these operons. This Pseudarthrobacter chlorophenolicus (strain ATCC 700700 / DSM 12829 / CIP 107037 / JCM 12360 / KCTC 9906 / NCIMB 13794 / A6) (Arthrobacter chlorophenolicus) protein is Heat-inducible transcription repressor HrcA.